We begin with the raw amino-acid sequence, 545 residues long: Ubiquitin carboxyl-terminal hydrolase 17-like protein C (545 aa).

Residues 51–348 (CGLQNTGNSC…NAYVLFYVQQ (298 aa)) enclose the USP domain. Residue Cys60 is the Nucleophile of the active site. His307 acts as the Proton acceptor in catalysis. Disordered stretches follow at residues 368–442 (DPEY…QKLG) and 489–539 (WGRD…KQGQ). The span at 374-385 (KKSRRKKHKKKS) shows a compositional bias: basic residues. Basic and acidic residues-rich tracts occupy residues 393 to 404 (EPCKNREKRATK) and 489 to 505 (WGRDAPDKENQPWHNAD). Residues 508 to 519 (LTSQDPVNTGQL) are compositionally biased toward polar residues. Positions 524–537 (GRRRSKKGKNKNKQ) are enriched in basic residues.

Belongs to the peptidase C19 family. USP17 subfamily. In terms of tissue distribution, expressed in T cells.

It localises to the nucleus. The protein localises to the endoplasmic reticulum. It carries out the reaction Thiol-dependent hydrolysis of ester, thioester, amide, peptide and isopeptide bonds formed by the C-terminal Gly of ubiquitin (a 76-residue protein attached to proteins as an intracellular targeting signal).. In terms of biological role, deubiquitinating enzyme that removes conjugated ubiquitin from specific proteins to regulate different cellular processes. Important for preimplantation stage embryonic development. The protein is Ubiquitin carboxyl-terminal hydrolase 17-like protein C of Mus musculus (Mouse).